A 188-amino-acid chain; its full sequence is Elongation factor P (188 aa).

Lysine 34 carries the N6-(3,6-diaminohexanoyl)-5-hydroxylysine modification.

The protein belongs to the elongation factor P family. Post-translationally, may be beta-lysylated on the epsilon-amino group of Lys-34 by the combined action of EpmA and EpmB, and then hydroxylated on the C5 position of the same residue by EpmC (if this protein is present). Lysylation is critical for the stimulatory effect of EF-P on peptide-bond formation. The lysylation moiety may extend toward the peptidyltransferase center and stabilize the terminal 3-CCA end of the tRNA. Hydroxylation of the C5 position on Lys-34 may allow additional potential stabilizing hydrogen-bond interactions with the P-tRNA.

Its subcellular location is the cytoplasm. It participates in protein biosynthesis; polypeptide chain elongation. In terms of biological role, involved in peptide bond synthesis. Alleviates ribosome stalling that occurs when 3 or more consecutive Pro residues or the sequence PPG is present in a protein, possibly by augmenting the peptidyl transferase activity of the ribosome. Modification of Lys-34 is required for alleviation. This is Elongation factor P from Xanthomonas oryzae pv. oryzae (strain MAFF 311018).